The sequence spans 335 residues: Dihydroorotate dehydrogenase (quinone) (335 aa).

FMN-binding positions include alanine 58–lysine 62 and threonine 82. Residue lysine 62 coordinates substrate. Asparagine 107–phenylalanine 111 contributes to the substrate binding site. FMN-binding residues include asparagine 135 and asparagine 168. A substrate-binding site is contributed by asparagine 168. The Nucleophile role is filled by serine 171. Residue asparagine 173 coordinates substrate. The FMN site is built by lysine 213 and glycine 241. A substrate-binding site is contributed by asparagine 242–threonine 243. FMN is bound by residues glycine 264, glycine 293, and tyrosine 314–serine 315.

Belongs to the dihydroorotate dehydrogenase family. Type 2 subfamily. In terms of assembly, monomer. The cofactor is FMN.

The protein resides in the cell membrane. The catalysed reaction is (S)-dihydroorotate + a quinone = orotate + a quinol. Its pathway is pyrimidine metabolism; UMP biosynthesis via de novo pathway; orotate from (S)-dihydroorotate (quinone route): step 1/1. Functionally, catalyzes the conversion of dihydroorotate to orotate with quinone as electron acceptor. In Actinobacillus pleuropneumoniae serotype 7 (strain AP76), this protein is Dihydroorotate dehydrogenase (quinone).